The following is a 281-amino-acid chain: Large ribosomal subunit protein uL2 (281 aa).

Residues 210–281 are disordered; the sequence is RTRYAGQRPH…RGRKRGPHTR (72 aa). The segment covering 254–281 has biased composition (basic residues); sequence TVGKKTRSHKARSNKFIVRGRKRGPHTR.

Belongs to the universal ribosomal protein uL2 family. As to quaternary structure, part of the 50S ribosomal subunit. Forms a bridge to the 30S subunit in the 70S ribosome.

In terms of biological role, one of the primary rRNA binding proteins. Required for association of the 30S and 50S subunits to form the 70S ribosome, for tRNA binding and peptide bond formation. It has been suggested to have peptidyltransferase activity; this is somewhat controversial. Makes several contacts with the 16S rRNA in the 70S ribosome. This Limosilactobacillus reuteri subsp. reuteri (strain JCM 1112) (Lactobacillus reuteri) protein is Large ribosomal subunit protein uL2.